We begin with the raw amino-acid sequence, 143 residues long: Endoribonuclease YbeY (143 aa).

The Zn(2+) site is built by H106, H110, and H116.

It belongs to the endoribonuclease YbeY family. Zn(2+) serves as cofactor.

The protein localises to the cytoplasm. In terms of biological role, single strand-specific metallo-endoribonuclease involved in late-stage 70S ribosome quality control and in maturation of the 3' terminus of the 16S rRNA. This chain is Endoribonuclease YbeY, found in Petrotoga mobilis (strain DSM 10674 / SJ95).